A 174-amino-acid polypeptide reads, in one-letter code: Small ribosomal subunit protein uS5c (174 aa).

The 64-residue stretch at 17–80 folds into the S5 DRBM domain; that stretch reads WEERVVQVKR…TDAKKHLVTV (64 aa).

Belongs to the universal ribosomal protein uS5 family. As to quaternary structure, part of the 30S ribosomal subunit. Contacts protein S4.

The protein localises to the plastid. The protein resides in the chloroplast. Functionally, with S4 and S12 plays an important role in translational accuracy. The sequence is that of Small ribosomal subunit protein uS5c (rps5) from Porphyra purpurea (Red seaweed).